A 331-amino-acid chain; its full sequence is Fructose-1,6-bisphosphatase class 1 2 (331 aa).

Mg(2+)-binding residues include E91, D112, L114, and D115. Substrate-binding positions include 115–118, N207, Y238, and K268; that span reads DGSS. E274 contacts Mg(2+).

Belongs to the FBPase class 1 family. As to quaternary structure, homotetramer. The cofactor is Mg(2+).

It localises to the cytoplasm. It catalyses the reaction beta-D-fructose 1,6-bisphosphate + H2O = beta-D-fructose 6-phosphate + phosphate. It participates in carbohydrate biosynthesis; Calvin cycle. In Acaryochloris marina (strain MBIC 11017), this protein is Fructose-1,6-bisphosphatase class 1 2.